An 877-amino-acid chain; its full sequence is Alanine--tRNA ligase (877 aa).

4 residues coordinate Zn(2+): histidine 567, histidine 571, cysteine 669, and histidine 673.

This sequence belongs to the class-II aminoacyl-tRNA synthetase family. It depends on Zn(2+) as a cofactor.

It is found in the cytoplasm. The enzyme catalyses tRNA(Ala) + L-alanine + ATP = L-alanyl-tRNA(Ala) + AMP + diphosphate. In terms of biological role, catalyzes the attachment of alanine to tRNA(Ala) in a two-step reaction: alanine is first activated by ATP to form Ala-AMP and then transferred to the acceptor end of tRNA(Ala). Also edits incorrectly charged Ser-tRNA(Ala) and Gly-tRNA(Ala) via its editing domain. This chain is Alanine--tRNA ligase, found in Rickettsia rickettsii (strain Iowa).